Consider the following 269-residue polypeptide: 4-hydroxy-tetrahydrodipicolinate reductase (269 aa).

Residues 8 to 13, 98 to 100, and 122 to 125 each bind NAD(+); these read GVAGRM, GTT, and APNM. Histidine 156 functions as the Proton donor/acceptor in the catalytic mechanism. Residue histidine 157 participates in (S)-2,3,4,5-tetrahydrodipicolinate binding. Residue lysine 160 is the Proton donor of the active site. 166–167 provides a ligand contact to (S)-2,3,4,5-tetrahydrodipicolinate; the sequence is GT.

Belongs to the DapB family.

Its subcellular location is the cytoplasm. The enzyme catalyses (S)-2,3,4,5-tetrahydrodipicolinate + NAD(+) + H2O = (2S,4S)-4-hydroxy-2,3,4,5-tetrahydrodipicolinate + NADH + H(+). It catalyses the reaction (S)-2,3,4,5-tetrahydrodipicolinate + NADP(+) + H2O = (2S,4S)-4-hydroxy-2,3,4,5-tetrahydrodipicolinate + NADPH + H(+). It participates in amino-acid biosynthesis; L-lysine biosynthesis via DAP pathway; (S)-tetrahydrodipicolinate from L-aspartate: step 4/4. Its function is as follows. Catalyzes the conversion of 4-hydroxy-tetrahydrodipicolinate (HTPA) to tetrahydrodipicolinate. The chain is 4-hydroxy-tetrahydrodipicolinate reductase from Chromohalobacter salexigens (strain ATCC BAA-138 / DSM 3043 / CIP 106854 / NCIMB 13768 / 1H11).